Here is a 153-residue protein sequence, read N- to C-terminus: Large ribosomal subunit protein uL22 (153 aa).

A disordered region spans residues 128 to 153 (ADRRARRAAAKPAASASPAANEGVPA). Low complexity predominate over residues 137 to 147 (AKPAASASPAA).

Belongs to the universal ribosomal protein uL22 family. In terms of assembly, part of the 50S ribosomal subunit.

In terms of biological role, this protein binds specifically to 23S rRNA; its binding is stimulated by other ribosomal proteins, e.g. L4, L17, and L20. It is important during the early stages of 50S assembly. It makes multiple contacts with different domains of the 23S rRNA in the assembled 50S subunit and ribosome. The globular domain of the protein is located near the polypeptide exit tunnel on the outside of the subunit, while an extended beta-hairpin is found that lines the wall of the exit tunnel in the center of the 70S ribosome. This is Large ribosomal subunit protein uL22 from Acidiphilium cryptum (strain JF-5).